Consider the following 516-residue polypeptide: Melianol synthase CYP71BQ17 (516 aa).

The chain crosses the membrane as a helical span at residues 14 to 34 (MPHLPSLPVSLSFLLFFLMLV). Cysteine 454 lines the heme pocket.

It belongs to the cytochrome P450 family. It depends on heme as a cofactor. In terms of tissue distribution, mainly expressed in roots and, to a lesser extent, in stems and old leaves.

The protein resides in the membrane. The enzyme catalyses dihydroniloticin + 2 reduced [NADPH--hemoprotein reductase] + 2 O2 = melianol + 2 oxidized [NADPH--hemoprotein reductase] + 3 H2O + 2 H(+). The protein operates within secondary metabolite biosynthesis; terpenoid biosynthesis. Monooxygenase involved in the biosynthesis of quassinoids triterpene natural products such as ailanthone, chaparrinone, glaucarubinone and amarolide, allelopathic degraded triterpene lactones inhibiting the growth of other plants, and possessing antimalarial, antifeedant, insecticidal, anti-inflammatory and anticancer activities. Catalyzes the conversion of dihydroniloticin to the protolimonoid melianol. This is Melianol synthase CYP71BQ17 from Ailanthus altissima (Tree-of-heaven).